We begin with the raw amino-acid sequence, 253 residues long: Acetylglutamate kinase (253 aa).

Substrate contacts are provided by residues 37–38, R59, and N149; that span reads GG.

This sequence belongs to the acetylglutamate kinase family. ArgB subfamily.

It localises to the cytoplasm. The catalysed reaction is N-acetyl-L-glutamate + ATP = N-acetyl-L-glutamyl 5-phosphate + ADP. The protein operates within amino-acid biosynthesis; L-arginine biosynthesis; N(2)-acetyl-L-ornithine from L-glutamate: step 2/4. Its function is as follows. Catalyzes the ATP-dependent phosphorylation of N-acetyl-L-glutamate. This chain is Acetylglutamate kinase, found in Rubrobacter xylanophilus (strain DSM 9941 / JCM 11954 / NBRC 16129 / PRD-1).